The sequence spans 38 residues: Large ribosomal subunit protein bL36 (38 aa).

Belongs to the bacterial ribosomal protein bL36 family.

The sequence is that of Large ribosomal subunit protein bL36 from Prochlorococcus marinus (strain SARG / CCMP1375 / SS120).